A 458-amino-acid polypeptide reads, in one-letter code: Cysteine--tRNA ligase (458 aa).

A Zn(2+)-binding site is contributed by Cys27. The 'HIGH' region signature appears at 29–39 (MTVYDYMHIGH). Cys208, His233, and Glu237 together coordinate Zn(2+). The 'KMSKS' region signature appears at 265–269 (KMSKS). Lys268 provides a ligand contact to ATP.

This sequence belongs to the class-I aminoacyl-tRNA synthetase family. As to quaternary structure, monomer. The cofactor is Zn(2+).

It is found in the cytoplasm. The enzyme catalyses tRNA(Cys) + L-cysteine + ATP = L-cysteinyl-tRNA(Cys) + AMP + diphosphate. The protein is Cysteine--tRNA ligase of Coxiella burnetii (strain Dugway 5J108-111).